A 239-amino-acid polypeptide reads, in one-letter code: Segregation and condensation protein A (239 aa).

It belongs to the ScpA family. Component of a cohesin-like complex composed of ScpA, ScpB and the Smc homodimer, in which ScpA and ScpB bind to the head domain of Smc. The presence of the three proteins is required for the association of the complex with DNA.

It localises to the cytoplasm. In terms of biological role, participates in chromosomal partition during cell division. May act via the formation of a condensin-like complex containing Smc and ScpB that pull DNA away from mid-cell into both cell halves. The sequence is that of Segregation and condensation protein A from Streptococcus suis (strain 98HAH33).